Consider the following 139-residue polypeptide: Sec-independent protein translocase protein TatB (139 aa).

A helical membrane pass occupies residues 1-21 (MFDMGFLELMLIGVVALLVLG). The segment covering 66 to 86 (QQRKLDAGLGKVRDEVERHGD) has biased composition (basic and acidic residues). The segment at 66-139 (QQRKLDAGLG…APSAKDSNAP (74 aa)) is disordered.

It belongs to the TatB family. In terms of assembly, the Tat system comprises two distinct complexes: a TatABC complex, containing multiple copies of TatA, TatB and TatC subunits, and a separate TatA complex, containing only TatA subunits. Substrates initially bind to the TatABC complex, which probably triggers association of the separate TatA complex to form the active translocon.

It is found in the cell inner membrane. Its function is as follows. Part of the twin-arginine translocation (Tat) system that transports large folded proteins containing a characteristic twin-arginine motif in their signal peptide across membranes. Together with TatC, TatB is part of a receptor directly interacting with Tat signal peptides. TatB may form an oligomeric binding site that transiently accommodates folded Tat precursor proteins before their translocation. This Chromohalobacter salexigens (strain ATCC BAA-138 / DSM 3043 / CIP 106854 / NCIMB 13768 / 1H11) protein is Sec-independent protein translocase protein TatB.